A 3147-amino-acid polypeptide reads, in one-letter code: Probable polyketide synthase 1 (3147 aa).

Residues 12–457 (SSDVAVIGVG…GSNCHLIIQE (446 aa)) enclose the Ketosynthase family 3 (KS3) domain. Active-site for beta-ketoacyl synthase activity residues include Cys-180 and His-319. Residues 345–369 (QLNNFSTDGNDNDDDDDDNTSPEPL) are disordered. Over residues 354–364 (NDNDDDDDDNT) the composition is skewed to acidic residues. His-380 (for beta-ketoacyl synthase activity) is an active-site residue. Positions 672–705 (GIYPSISVGHSFGEVSSYYLSGIISLETACKIVY) are acyl/malonyl transferase. The active-site For acyl/malonyl transferase activity is the Ser-682. The tract at residues 976–1127 (NRLEGPTTSL…ATISLEQQQP (152 aa)) is N-terminal hotdog fold. One can recognise a PKS/mFAS DH domain in the interval 976–1298 (NRLEGPTTSL…IKSTNPKSTK (323 aa)). The active-site Proton acceptor; for dehydratase activity is the His-1014. The tract at residues 1149–1298 (DISKLDKFEL…IKSTNPKSTK (150 aa)) is C-terminal hotdog fold. The Proton donor; for dehydratase activity role is filled by Asp-1209. The region spanning 2568-2645 (SSNISLQDKI…SFLEKVNGLS (78 aa)) is the Carrier domain. Ser-2605 is subject to O-(pantetheine 4'-phosphoryl)serine. Residues 2723–2747 (PSLSQSDVLKTPPIKSLNNTKNSSL) are disordered. Residues 2738 to 2747 (SLNNTKNSSL) are compositionally biased toward polar residues. A chalcone synthase region spans residues 2789–3147 (VLGIGISVPG…FEGCFLKNVV (359 aa)). Cys-2930 is an active-site residue.

This sequence in the C-terminal section; belongs to the thiolase-like superfamily. Chalcone/stilbene synthases family. In terms of assembly, homodimer. It depends on pantetheine 4'-phosphate as a cofactor.

The enzyme catalyses (E)-4-coumaroyl-CoA + 3 malonyl-CoA + 3 H(+) = 2',4,4',6'-tetrahydroxychalcone + 3 CO2 + 4 CoA. It participates in secondary metabolite biosynthesis; flavonoid biosynthesis. Probable polyketide synthase. Produces only acylpyrones; in vitro. The chain is Probable polyketide synthase 1 (stlA) from Dictyostelium discoideum (Social amoeba).